We begin with the raw amino-acid sequence, 120 residues long: MPLPCIPPPPVSRDTAACIAWLGLAHASCVDTLRFIKHHDLKITPEAEYILASLREWLYFAFLTERQRCKQKGRGAITSGRTWFCFFKYEDARKSVVYDAARQTVSLQIGTIQQVPTTAL.

This is Probable early E4 13 kDa protein from Human adenovirus A serotype 12 (HAdV-12).